Consider the following 62-residue polypeptide: Endoregulin (62 aa).

Residues L25–F45 traverse the membrane as a helical segment.

As to quaternary structure, homooligomer. Can also form heterooligomers with other sarcoplasmic/endoplasmic reticulum calcium ATPase (SERCA) regulators ARLN, PLN, SLN and STRIT1/DWORF. Monomer. Interacts as a monomer with ATP2A2/SERCA2; the interaction results in inhibition of ATP2A2 Ca(2+) affinity.

It is found in the endoplasmic reticulum membrane. Its function is as follows. Inhibits the activity of the calcium ATPases ATP2A2/SERCA2 and ATP2A3/SERCA3 by decreasing their apparent affinity for Ca(2+). In Homo sapiens (Human), this protein is Endoregulin.